Here is a 1323-residue protein sequence, read N- to C-terminus: Tetratricopeptide repeat protein 21 homolog (1323 aa).

TPR repeat units follow at residues 56–89 (VPLAILKGVCLVLLGKIPEAIRHLEAFSNDQNFS), 411–444 (ESPFYYLIASVLAKHSKDKSFENFRQHIENLIEM), 580–613 (SLYHLIKSKTFKKRNENDEALKTLKMALQIPKKE), 667–700 (HQLVIAQAQLYLTKGHTEKALAILRKIQPGQSNF), 702–735 (LSRIRMAEIYLEEKKDKRMFAACYRELLKVEPTP), 736–768 (GSYSLLGDAFMKVQEPEDAINFYEQALKMQSKD), 770–802 (QLAEKIGEAYVMAHLYSKAVNFYESSMNIYKDK), 804–835 (MRLKLANLLLRLKNYEKCEKILRAPLDREPEP), 845–878 (IQFLLLLAECHEMVENIPEAMKDFEKAKSLHNKI), 892–925 (ARICNLQAELYYRRHEFPPAIEVCKQALQFYETD), 927–959 (KSNLLLSRIYKDENKWTLVLQPCQAVLQVDPHN), 961–993 (EANLILADFYYIKSEADHAMTSYITLLNKNPLH), 995–1027 (HALFRVVELYCRKGEHHKADEFLNSARDANPRC), 1031–1064 (AGYSVCRGRFEWYTGDQSQALRCYSRAKDSPNVV), 1203–1236 (EKCWLLMAEIYVGASKWEQAGTYLDQVLKYNCNS), 1238–1270 (RAFELYGQAKEKEQKYVEASKIYEKAFNTTNQK), and 1272–1305 (CSFGYKLAFTLLKTRRLFLCIETCQKVLDINPQY).

The protein belongs to the TTC21 family.

The polypeptide is Tetratricopeptide repeat protein 21 homolog (Caenorhabditis briggsae).